The primary structure comprises 211 residues: Histidine biosynthesis bifunctional protein HisIE (211 aa).

The tract at residues 1–107 (MNKLIDFSKG…FNSEIESRFK (107 aa)) is phosphoribosyl-AMP cyclohydrolase. The phosphoribosyl-ATP pyrophosphohydrolase stretch occupies residues 108-211 (IQALAQTIHQ…KGERKKVQEW (104 aa)).

The protein in the N-terminal section; belongs to the PRA-CH family. In the C-terminal section; belongs to the PRA-PH family.

The protein localises to the cytoplasm. The catalysed reaction is 1-(5-phospho-beta-D-ribosyl)-ATP + H2O = 1-(5-phospho-beta-D-ribosyl)-5'-AMP + diphosphate + H(+). The enzyme catalyses 1-(5-phospho-beta-D-ribosyl)-5'-AMP + H2O = 1-(5-phospho-beta-D-ribosyl)-5-[(5-phospho-beta-D-ribosylamino)methylideneamino]imidazole-4-carboxamide. The protein operates within amino-acid biosynthesis; L-histidine biosynthesis; L-histidine from 5-phospho-alpha-D-ribose 1-diphosphate: step 2/9. It functions in the pathway amino-acid biosynthesis; L-histidine biosynthesis; L-histidine from 5-phospho-alpha-D-ribose 1-diphosphate: step 3/9. This chain is Histidine biosynthesis bifunctional protein HisIE, found in Staphylococcus epidermidis (strain ATCC 12228 / FDA PCI 1200).